Reading from the N-terminus, the 99-residue chain is METTKSNSSESDVNAKWDACLDLTARRFVYSSLGGAFAGLLFFRSPVTRWASIAFGAGIGIGSAYTDCSRVFDASSSTSATLLAAPKSTETSVSQAAEE.

Helical transmembrane passes span 27–43 and 50–66; these read RFVY…LLFF and WASI…SAYT.

This sequence belongs to the MICOS complex subunit Mic10 family. As to quaternary structure, component of the mitochondrial contact site and cristae organizing system (MICOS) complex. The MICOS complex associates with mitochondrial outer membrane proteins. Present in a large lipid-enriched complex called mitochondrial transmembrane lipoprotein (MTL) complex made of proteins located in the two mitochondrial membranes, including the TOM complex and the core components of the MICOS complex and containing at least digalactosyldiacylglycerol (DGDG).

The protein resides in the mitochondrion inner membrane. Component of the MICOS complex, a large protein complex of the mitochondrial inner membrane that plays crucial roles in the maintenance of crista junctions, inner membrane architecture, and formation of contact sites to the outer membrane. The sequence is that of MICOS complex subunit MIC10 from Arabidopsis thaliana (Mouse-ear cress).